A 223-amino-acid chain; its full sequence is Imidazoleglycerol-phosphate dehydratase (223 aa).

It belongs to the imidazoleglycerol-phosphate dehydratase family.

The catalysed reaction is D-erythro-1-(imidazol-4-yl)glycerol 3-phosphate = 3-(imidazol-4-yl)-2-oxopropyl phosphate + H2O. The protein operates within amino-acid biosynthesis; L-histidine biosynthesis; L-histidine from 5-phospho-alpha-D-ribose 1-diphosphate: step 6/9. The polypeptide is Imidazoleglycerol-phosphate dehydratase (HIS3) (Torulaspora delbrueckii (Yeast)).